Consider the following 523-residue polypeptide: Sugar carrier protein C (523 aa).

The Cytoplasmic portion of the chain corresponds to M1–V25. Transmembrane regions (helical) follow at residues T26–S46, M86–T106, V120–L140, I143–M163, L172–Y192, L205–P225, L298–D320, V327–W347, F351–I371, W387–W407, S433–L453, and G456–L476. Residues P477–V523 lie on the Cytoplasmic side of the membrane.

The protein belongs to the major facilitator superfamily. Sugar transporter (TC 2.A.1.1) family.

The protein localises to the membrane. The protein is Sugar carrier protein C (STC) of Ricinus communis (Castor bean).